The sequence spans 361 residues: Peptide chain release factor 1 (361 aa).

Q235 is modified (N5-methylglutamine). Residues 284–306 are disordered; the sequence is SQQATAEAMTRKLQVGSGDRSQR.

This sequence belongs to the prokaryotic/mitochondrial release factor family. Post-translationally, methylated by PrmC. Methylation increases the termination efficiency of RF1.

The protein localises to the cytoplasm. Its function is as follows. Peptide chain release factor 1 directs the termination of translation in response to the peptide chain termination codons UAG and UAA. In Xylella fastidiosa (strain 9a5c), this protein is Peptide chain release factor 1.